The chain runs to 336 residues: Probable G-protein coupled receptor 160 (336 aa).

Topologically, residues 1–20 (MTALSSKNCSLQYQLHQSPQ) are extracellular. The N-linked (GlcNAc...) asparagine glycan is linked to N8. The helical transmembrane segment at 21–41 (LLEASCLLFLIILGKVLLNIL) threads the bilayer. Residues 42 to 56 (LLRVRRGDARWTLME) lie on the Cytoplasmic side of the membrane. A helical transmembrane segment spans residues 57-77 (YFCFSLALVDLLLLVNISILT). The Extracellular portion of the chain corresponds to 78–95 (YFRDFVVLGIRFTRYHIC). A helical membrane pass occupies residues 96–116 (LLTQIISFTYGFLHYPVCSLA). The Cytoplasmic segment spans residues 117–136 (CIDYWCNLSRASKQSSRWQK). A helical membrane pass occupies residues 137–157 (LLYFLTVILTWISVLAYVLVD). At 158-186 (PAISVSLKAHRGYVYQCPAYVSTQSHWLS) the chain is on the extracellular side. Residues 187–207 (LSMLMVLFVAFLISWQEVVAL) traverse the membrane as a helical segment. Over 208–243 (LQAMRIASYKSKAALYFPFPLHCGYALSCREALLPR) the chain is Cytoplasmic. A helical transmembrane segment spans residues 244 to 264 (LIVCFLGTWFPFVALQVLILS). The Extracellular portion of the chain corresponds to 265–272 (LRVQIPAY). A helical transmembrane segment spans residues 273–293 (IEMNVPWLYFVNSFLIAAVYW). The Cytoplasmic portion of the chain corresponds to 294–336 (FNCHKLDLRDSSLPVDPFINWKCCFVPVHRLKQVERPMSIVIC).

Belongs to the G-protein coupled receptor 1 family.

The protein localises to the cell membrane. Functionally, orphan receptor. The sequence is that of Probable G-protein coupled receptor 160 (Gpr160) from Mus musculus (Mouse).